Consider the following 340-residue polypeptide: 4-hydroxy-2-oxovalerate aldolase (340 aa).

Residues 8-260 (VILHDMSLRD…HHGVNLYDIM (253 aa)) enclose the Pyruvate carboxyltransferase domain. 16–17 (RD) provides a ligand contact to substrate. Mn(2+) is bound at residue D17. H20 (proton acceptor) is an active-site residue. S170 and H199 together coordinate substrate. Mn(2+) contacts are provided by H199 and H201. Y290 lines the substrate pocket.

Belongs to the 4-hydroxy-2-oxovalerate aldolase family.

It catalyses the reaction (S)-4-hydroxy-2-oxopentanoate = acetaldehyde + pyruvate. This Shewanella halifaxensis (strain HAW-EB4) protein is 4-hydroxy-2-oxovalerate aldolase.